Consider the following 530-residue polypeptide: Bifunctional purine biosynthesis protein PurH (530 aa).

Residues 1–148 (MENSRPIKRA…KNHKDVGIVV (148 aa)) form the MGS-like domain.

The protein belongs to the PurH family.

It carries out the reaction (6R)-10-formyltetrahydrofolate + 5-amino-1-(5-phospho-beta-D-ribosyl)imidazole-4-carboxamide = 5-formamido-1-(5-phospho-D-ribosyl)imidazole-4-carboxamide + (6S)-5,6,7,8-tetrahydrofolate. The catalysed reaction is IMP + H2O = 5-formamido-1-(5-phospho-D-ribosyl)imidazole-4-carboxamide. Its pathway is purine metabolism; IMP biosynthesis via de novo pathway; 5-formamido-1-(5-phospho-D-ribosyl)imidazole-4-carboxamide from 5-amino-1-(5-phospho-D-ribosyl)imidazole-4-carboxamide (10-formyl THF route): step 1/1. It functions in the pathway purine metabolism; IMP biosynthesis via de novo pathway; IMP from 5-formamido-1-(5-phospho-D-ribosyl)imidazole-4-carboxamide: step 1/1. In Psychromonas ingrahamii (strain DSM 17664 / CCUG 51855 / 37), this protein is Bifunctional purine biosynthesis protein PurH.